Here is a 334-residue protein sequence, read N- to C-terminus: MESLINPSHGGGNYDSHSSSLDSLKPSVLVIILILLMTLLISVSICFLLRCLNRCSHRSVLPLSSSSSVATVTSDSRRFSGHRVSPETERSSVLDSLPIFKFSSVTRRSSSMNSGDCAVCLSKFEPEDQLRLLPLCCHAFHADCIDIWLVSNQTCPLCRSPLFASESDLMKSLAVVGSNNGGGENSFRLEIGSISRRRQTPIPESVEQHRTYSIGSFDYIVDDVDSEISESNFNRGKQEDATTTTATATAVTTNPTSFEASLAADIGNDGSRSWLKDYVDRLSRGISSRAMSFRSSGRFFTGSSRRSEELTVMDLEANHAGEEISELFRWLSGV.

The tract at residues 1–20 (MESLINPSHGGGNYDSHSSS) is disordered. The chain crosses the membrane as a helical span at residues 28–48 (VLVIILILLMTLLISVSICFL). The RING-type; atypical zinc-finger motif lies at 117–159 (CAVCLSKFEPEDQLRLLPLCCHAFHADCIDIWLVSNQTCPLCR).

This sequence belongs to the RING-type zinc finger family. ATL subfamily.

It localises to the membrane. It carries out the reaction S-ubiquitinyl-[E2 ubiquitin-conjugating enzyme]-L-cysteine + [acceptor protein]-L-lysine = [E2 ubiquitin-conjugating enzyme]-L-cysteine + N(6)-ubiquitinyl-[acceptor protein]-L-lysine.. Its pathway is protein modification; protein ubiquitination. Its function is as follows. E3 ubiquitin-protein ligase able to catalyze polyubiquitination with ubiquitin-conjugating enzyme E2 UBC8 in vitro. This chain is E3 ubiquitin-protein ligase ATL4, found in Arabidopsis thaliana (Mouse-ear cress).